A 194-amino-acid chain; its full sequence is Potassium-transporting ATPase KdpC subunit (194 aa).

Residues 12–34 form a helical membrane-spanning segment; it reads LFLLLLTGGVYPLLTTALGQWWF.

It belongs to the KdpC family. As to quaternary structure, the system is composed of three essential subunits: KdpA, KdpB and KdpC.

It localises to the cell inner membrane. In terms of biological role, part of the high-affinity ATP-driven potassium transport (or Kdp) system, which catalyzes the hydrolysis of ATP coupled with the electrogenic transport of potassium into the cytoplasm. This subunit acts as a catalytic chaperone that increases the ATP-binding affinity of the ATP-hydrolyzing subunit KdpB by the formation of a transient KdpB/KdpC/ATP ternary complex. This is Potassium-transporting ATPase KdpC subunit from Salmonella enteritidis PT4 (strain P125109).